Reading from the N-terminus, the 1020-residue chain is Sodium/potassium-transporting ATPase subunit alpha-2 (1020 aa).

A propeptide spanning residues 1 to 5 (MGRGA) is cleaved from the precursor. The interval 1–31 (MGRGAGREYSPAATTAENGGGKKKQKEKELD) is disordered. Topologically, residues 6–85 (GREYSPAATT…NALTPPPTTP (80 aa)) are cytoplasmic. S10 bears the Phosphoserine mark. Positions 80–82 (PPP) are interaction with phosphoinositide-3 kinase. A helical transmembrane segment spans residues 86–106 (EWVKFCRQLFGGFSILLWIGA). The Extracellular segment spans residues 107 to 129 (ILCFLAYGIQAAMEDEPSNDNLY). A helical transmembrane segment spans residues 130-150 (LGVVLAAVVIVTGCFSYYQEA). The Cytoplasmic portion of the chain corresponds to 151-286 (KSSKIMDSFK…VGRTPIAMEI (136 aa)). Over residues 212-227 (DNSSLTGESEPQTRSP) the composition is skewed to polar residues. Residues 212 to 231 (DNSSLTGESEPQTRSPEFTH) are disordered. A helical membrane pass occupies residues 287-306 (EHFIQLITGVAVFLGVSFFV). Residues 307–318 (LSLILGYSWLEA) are Extracellular-facing. The helical transmembrane segment at 319 to 336 (VIFLIGIIVANVPEGLLA) threads the bilayer. The Cytoplasmic portion of the chain corresponds to 337 to 769 (TVTVCLTLTA…EEGRLIFDNL (433 aa)). D374 functions as the 4-aspartylphosphate intermediate in the catalytic mechanism. 3 positions are modified to phosphoserine: S439, S450, and S559. Phosphothreonine is present on T570. Phosphoserine is present on residues S587 and S672. 2 residues coordinate Mg(2+): D714 and D718. A helical membrane pass occupies residues 770 to 789 (KKSIAYTLTSNIPEITPFLL). Over 790 to 799 (FIIANIPLPL) the chain is Extracellular. A helical transmembrane segment spans residues 800–820 (GTVTILCIDLGTDMVPAISLA). Topologically, residues 821 to 840 (YEAAESDIMKRQPRNPQTDK) are cytoplasmic. Phosphoserine is present on S826. Residues 841–863 (LVNERLISMAYGQIGMIQALGGF) traverse the membrane as a helical segment. At 864-915 (FTYFVILAENGFLPSRLLGIRLDWDDRSMNDLEDSYGQEWTYEQRKVVEFTC) the chain is on the extracellular side. Residues 916–935 (HTAFFASIVVVQWADLIICK) traverse the membrane as a helical segment. At 936 to 948 (TRRNSVFQQGMKN) the chain is on the cytoplasmic side. S940 is subject to Phosphoserine; by PKA. The chain crosses the membrane as a helical span at residues 949–967 (KILIFGLLEETALAAFLSY). The Extracellular portion of the chain corresponds to 968–982 (CPGMGVALRMYPLKV). The helical transmembrane segment at 983-1003 (TWWFCAFPYSLLIFIYDEVRK) threads the bilayer. Residues 1004–1020 (LILRRYPGGWVEKETYY) are Cytoplasmic-facing.

This sequence belongs to the cation transport ATPase (P-type) (TC 3.A.3) family. Type IIC subfamily. The sodium/potassium-transporting ATPase is composed of a catalytic alpha subunit, an auxiliary non-catalytic beta subunit and an additional regulatory subunit. Interacts with regulatory subunit FXYD1.

It localises to the membrane. The protein resides in the cell membrane. The enzyme catalyses K(+)(out) + Na(+)(in) + ATP + H2O = K(+)(in) + Na(+)(out) + ADP + phosphate + H(+). Its function is as follows. This is the catalytic component of the active enzyme, which catalyzes the hydrolysis of ATP coupled with the exchange of sodium and potassium ions across the plasma membrane. This action creates the electrochemical gradient of sodium and potassium, providing the energy for active transport of various nutrients. The protein is Sodium/potassium-transporting ATPase subunit alpha-2 (ATP1A2) of Sus scrofa (Pig).